Reading from the N-terminus, the 298-residue chain is uncharacterized protein (298 aa).

This is an uncharacterized protein from Ictalurid herpesvirus 1 (strain Auburn) (IcHV-1).